The primary structure comprises 124 residues: Small ribosomal subunit protein uS12 (124 aa).

At Asp-89 the chain carries 3-methylthioaspartic acid.

It belongs to the universal ribosomal protein uS12 family. In terms of assembly, part of the 30S ribosomal subunit. Contacts proteins S8 and S17. May interact with IF1 in the 30S initiation complex.

Functionally, with S4 and S5 plays an important role in translational accuracy. Its function is as follows. Interacts with and stabilizes bases of the 16S rRNA that are involved in tRNA selection in the A site and with the mRNA backbone. Located at the interface of the 30S and 50S subunits, it traverses the body of the 30S subunit contacting proteins on the other side and probably holding the rRNA structure together. The combined cluster of proteins S8, S12 and S17 appears to hold together the shoulder and platform of the 30S subunit. This chain is Small ribosomal subunit protein uS12, found in Blochmanniella floridana.